The following is a 690-amino-acid chain: Cyclic nucleotide-gated channel alpha-1 (690 aa).

At 1–163 the chain is on the cytoplasmic side; sequence MKKVIINTWH…VVIDPSGNTY (163 aa). 2 disordered regions span residues 33-76 and 88-151; these read GACS…PSQR and NVNN…EEKK. Acidic residues predominate over residues 40 to 54; sequence GDDDDSASMFEESET. The segment covering 64–76 has biased composition (polar residues); the sequence is RSNTHGSGQPSQR. The span at 111–151 shows a compositional bias: basic and acidic residues; the sequence is SKPDDKNENKKDPEKKKKKEKDKDKKKKEEKGKDKKEEEKK. A helical membrane pass occupies residues 164–185; that stretch reads YNWLFCITLPVMYNWTMIIARA. Over 186–195 the chain is Extracellular; it reads CFDELQSDYL. A helical membrane pass occupies residues 196-215; the sequence is EYWLAFDYLSDVVYLLDMFV. The Cytoplasmic portion of the chain corresponds to 216-241; the sequence is RTRTGYLEQGLLVKEERKLIDKYKST. Residues 242–251 form a helical membrane-spanning segment; the sequence is FQFKLDVLSV. Topologically, residues 252 to 264 are extracellular; that stretch reads IPTDLLYIKFGWN. The helical transmembrane segment at 265–283 threads the bilayer; it reads YPEIRLNRLLRISRMFEFF. At 284–291 the chain is on the cytoplasmic side; that stretch reads QRTETRTN. A helical transmembrane segment spans residues 292–315; it reads YPNIFRISNLVMYIIIIIHWNACV. Residues 293–402 are ion conduction pathway; sequence PNIFRISNLV…NIGSMISNMN (110 aa). At 316-342 the chain is on the extracellular side; the sequence is YFSISKAIGFGNDTWVYPDVNDPDFGR. An N-linked (GlcNAc...) asparagine glycan is attached at Asn-327. A run of 2 helical transmembrane segments spans residues 343–373 and 374–399; these read LARK…DSEY and FFVV…SMIS. Residues 360-363 are selectivity filter; the sequence is TIGE. The Cytoplasmic segment spans residues 400-690; sequence NMNAARAEFQ…ESGPTDSTQD (291 aa). Residues 403–479 form a C-linker region; that stretch reads AARAEFQARI…DTLKKVRIFA (77 aa). A cyclic nucleotide-binding domain (CNBD) region spans residues 482-603; it reads EAGLLVELVL…EEKGKQILMK (122 aa). Positions 543, 546, 559, and 560 each coordinate 3',5'-cyclic GMP. 3',5'-cyclic AMP contacts are provided by Arg-559 and Thr-560. Residues 621-664 are a coiled coil; the sequence is LEEKVTRMESSVDLLQTRFARILAEYESMQQKLKQRLTKVEKFL.

It belongs to the cyclic nucleotide-gated cation channel (TC 1.A.1.5) family. CNGA1 subfamily. Forms a heterotetramer with CNGB1 in a 3:1 ratio. May also form cyclic nucleotide-activated homotetrameric channels, that are efficiently activated by saturating cGMP, but poorly activated by saturating cAMP compared to the heterotetramer with CNGB1. The channel binds Ca(2+)-bound CALM1 via CaM1 and CaM2 regions of the CNGB1 subunit; this interaction modulates the affinity of the channel for cNMPs in response to intracellular Ca(2+) levels. Expressed in the retina, in rod cells (at protein level).

It localises to the cell membrane. The enzyme catalyses Ca(2+)(in) = Ca(2+)(out). It carries out the reaction Na(+)(in) = Na(+)(out). The catalysed reaction is K(+)(in) = K(+)(out). It catalyses the reaction NH4(+)(in) = NH4(+)(out). The enzyme catalyses Rb(+)(in) = Rb(+)(out). It carries out the reaction Li(+)(in) = Li(+)(out). The catalysed reaction is Cs(+)(in) = Cs(+)(out). Functionally, pore-forming subunit of the rod cyclic nucleotide-gated channel. Mediates rod photoresponses at dim light converting transient changes in intracellular cGMP levels into electrical signals. In the dark, cGMP levels are high and keep the channel open enabling a steady inward current carried by Na(+) and Ca(2+) ions that leads to membrane depolarization and neurotransmitter release from synaptic terminals. Upon photon absorption cGMP levels decline leading to channel closure and membrane hyperpolarization that ultimately slows neurotransmitter release and signals the presence of light, the end point of the phototransduction cascade. Conducts cGMP- and cAMP-gated ion currents, with permeability for monovalent and divalent cations. The selectivity for Ca(2+) over Na(+) increases with cGMP concentrations, whereas the selectivity among monovalent ions is independent of the cGMP levels. This is Cyclic nucleotide-gated channel alpha-1 from Bos taurus (Bovine).